A 216-amino-acid chain; its full sequence is Peptide deformylase (216 aa).

Positions 134 and 178 each coordinate Fe cation. Residue glutamate 179 is part of the active site. Histidine 182 contacts Fe cation.

It belongs to the polypeptide deformylase family. It depends on Fe(2+) as a cofactor.

The enzyme catalyses N-terminal N-formyl-L-methionyl-[peptide] + H2O = N-terminal L-methionyl-[peptide] + formate. Its function is as follows. Removes the formyl group from the N-terminal Met of newly synthesized proteins. Requires at least a dipeptide for an efficient rate of reaction. N-terminal L-methionine is a prerequisite for activity but the enzyme has broad specificity at other positions. The protein is Peptide deformylase of Mycoplasma pneumoniae (strain ATCC 29342 / M129 / Subtype 1) (Mycoplasmoides pneumoniae).